A 135-amino-acid polypeptide reads, in one-letter code: Ribonuclease P protein component (135 aa).

The segment at 115 to 135 (TNETVSPVSDTPLPQHERGSQ) is disordered.

The protein belongs to the RnpA family. Consists of a catalytic RNA component (M1 or rnpB) and a protein subunit.

The enzyme catalyses Endonucleolytic cleavage of RNA, removing 5'-extranucleotides from tRNA precursor.. In terms of biological role, RNaseP catalyzes the removal of the 5'-leader sequence from pre-tRNA to produce the mature 5'-terminus. It can also cleave other RNA substrates such as 4.5S RNA. The protein component plays an auxiliary but essential role in vivo by binding to the 5'-leader sequence and broadening the substrate specificity of the ribozyme. The sequence is that of Ribonuclease P protein component from Chloroflexus aurantiacus (strain ATCC 29366 / DSM 635 / J-10-fl).